Here is a 216-residue protein sequence, read N- to C-terminus: N-glycosylase/DNA lyase (216 aa).

8-oxoguanine-binding residues include Q27, S48, and W59. The segment at 106–170 (EHYYENMVAL…LDYRLKKINP (65 aa)) is helix-hairpin-helix. K130 (schiff-base intermediate with DNA) is an active-site residue. Positions 134 and 160 each coordinate 8-oxoguanine. D162 is a catalytic residue. D190 and W194 together coordinate 8-oxoguanine.

Belongs to the archaeal N-glycosylase/DNA lyase (AGOG) family.

The enzyme catalyses 2'-deoxyribonucleotide-(2'-deoxyribose 5'-phosphate)-2'-deoxyribonucleotide-DNA = a 3'-end 2'-deoxyribonucleotide-(2,3-dehydro-2,3-deoxyribose 5'-phosphate)-DNA + a 5'-end 5'-phospho-2'-deoxyribonucleoside-DNA + H(+). Functionally, DNA repair enzyme that is part of the base excision repair (BER) pathway; protects from oxidative damage by removing the major product of DNA oxidation, 8-oxoguanine (GO), from single- and double-stranded DNA substrates. This Nanoarchaeum equitans (strain Kin4-M) protein is N-glycosylase/DNA lyase.